The following is a 362-amino-acid chain: Peptide chain release factor 1 (362 aa).

Gln238 carries the post-translational modification N5-methylglutamine.

This sequence belongs to the prokaryotic/mitochondrial release factor family. Methylated by PrmC. Methylation increases the termination efficiency of RF1.

The protein localises to the cytoplasm. Peptide chain release factor 1 directs the termination of translation in response to the peptide chain termination codons UAG and UAA. The protein is Peptide chain release factor 1 of Psychrobacter arcticus (strain DSM 17307 / VKM B-2377 / 273-4).